The chain runs to 1072 residues: Carbamoyl phosphate synthase large chain (1072 aa).

The carboxyphosphate synthetic domain stretch occupies residues 1 to 401 (MPKRLDINTI…SLLKAVRSLE (401 aa)). ATP-binding residues include arginine 129, arginine 169, glycine 175, glycine 176, lysine 208, isoleucine 210, glutamate 215, glycine 241, valine 242, histidine 243, glutamine 284, and glutamate 298. The ATP-grasp 1 domain occupies 133 to 327 (RTLMQELNEP…IAKLAAKIAV (195 aa)). Mg(2+) is bound by residues glutamine 284, glutamate 298, and asparagine 300. Mn(2+) is bound by residues glutamine 284, glutamate 298, and asparagine 300. An oligomerization domain region spans residues 402-546 (LGIYHLELDH…YSTYADENEL (145 aa)). The segment at 547–929 (IVTDRKSVVV…ALYKGLVASG (383 aa)) is carbamoyl phosphate synthetic domain. The 191-residue stretch at 671 to 861 (EAALTKLGIP…MANVATKVIL (191 aa)) folds into the ATP-grasp 2 domain. Residues arginine 707, arginine 746, glutamate 752, glycine 777, valine 778, histidine 779, serine 780, glutamine 820, and glutamate 832 each contribute to the ATP site. Glutamine 820, glutamate 832, and asparagine 834 together coordinate Mg(2+). The Mn(2+) site is built by glutamine 820, glutamate 832, and asparagine 834. Residues 930 to 1072 (INIPTHGSVI…QTKRHEVVHA (143 aa)) form the MGS-like domain. The tract at residues 930–1072 (INIPTHGSVI…QTKRHEVVHA (143 aa)) is allosteric domain.

This sequence belongs to the CarB family. As to quaternary structure, composed of two chains; the small (or glutamine) chain promotes the hydrolysis of glutamine to ammonia, which is used by the large (or ammonia) chain to synthesize carbamoyl phosphate. Tetramer of heterodimers (alpha,beta)4. The cofactor is Mg(2+). Requires Mn(2+) as cofactor.

The enzyme catalyses hydrogencarbonate + L-glutamine + 2 ATP + H2O = carbamoyl phosphate + L-glutamate + 2 ADP + phosphate + 2 H(+). The catalysed reaction is hydrogencarbonate + NH4(+) + 2 ATP = carbamoyl phosphate + 2 ADP + phosphate + 2 H(+). It functions in the pathway amino-acid biosynthesis; L-arginine biosynthesis; carbamoyl phosphate from bicarbonate: step 1/1. The protein operates within pyrimidine metabolism; UMP biosynthesis via de novo pathway; (S)-dihydroorotate from bicarbonate: step 1/3. Functionally, large subunit of the glutamine-dependent carbamoyl phosphate synthetase (CPSase). CPSase catalyzes the formation of carbamoyl phosphate from the ammonia moiety of glutamine, carbonate, and phosphate donated by ATP, constituting the first step of 2 biosynthetic pathways, one leading to arginine and/or urea and the other to pyrimidine nucleotides. The large subunit (synthetase) binds the substrates ammonia (free or transferred from glutamine from the small subunit), hydrogencarbonate and ATP and carries out an ATP-coupled ligase reaction, activating hydrogencarbonate by forming carboxy phosphate which reacts with ammonia to form carbamoyl phosphate. This Bacillus anthracis (strain A0248) protein is Carbamoyl phosphate synthase large chain.